A 383-amino-acid chain; its full sequence is ATP phosphoribosyltransferase regulatory subunit (383 aa).

This sequence belongs to the class-II aminoacyl-tRNA synthetase family. HisZ subfamily. Heteromultimer composed of HisG and HisZ subunits.

The protein resides in the cytoplasm. It functions in the pathway amino-acid biosynthesis; L-histidine biosynthesis; L-histidine from 5-phospho-alpha-D-ribose 1-diphosphate: step 1/9. Functionally, required for the first step of histidine biosynthesis. May allow the feedback regulation of ATP phosphoribosyltransferase activity by histidine. This Chromobacterium violaceum (strain ATCC 12472 / DSM 30191 / JCM 1249 / CCUG 213 / NBRC 12614 / NCIMB 9131 / NCTC 9757 / MK) protein is ATP phosphoribosyltransferase regulatory subunit.